A 216-amino-acid polypeptide reads, in one-letter code: Early E3 25 kDa glycoprotein (216 aa).

N-linked (GlcNAc...) asparagine; by host glycans are attached at residues Asn-25, Asn-82, Asn-97, Asn-109, Asn-142, Asn-147, and Asn-160.

The polypeptide is Early E3 25 kDa glycoprotein (Canis lupus familiaris (Dog)).